The sequence spans 324 residues: Phospho-N-acetylmuramoyl-pentapeptide-transferase (324 aa).

10 consecutive transmembrane segments (helical) span residues 5–25 (AIVI…PLFI), 57–77 (IMIL…IAGL), 81–101 (TYLL…DDMI), 117–137 (FIGQ…SGFS), 147–167 (WSVD…VGGS), 176–196 (LDGL…VLAW), 203–223 (VAVF…FNAH), 227–247 (VFMG…VAVL), 250–270 (LELL…SVII), and 302–322 (IVVT…YIEV).

The protein belongs to the glycosyltransferase 4 family. MraY subfamily. Mg(2+) serves as cofactor.

The protein resides in the cell membrane. The catalysed reaction is UDP-N-acetyl-alpha-D-muramoyl-L-alanyl-gamma-D-glutamyl-meso-2,6-diaminopimeloyl-D-alanyl-D-alanine + di-trans,octa-cis-undecaprenyl phosphate = di-trans,octa-cis-undecaprenyl diphospho-N-acetyl-alpha-D-muramoyl-L-alanyl-D-glutamyl-meso-2,6-diaminopimeloyl-D-alanyl-D-alanine + UMP. The protein operates within cell wall biogenesis; peptidoglycan biosynthesis. In terms of biological role, catalyzes the initial step of the lipid cycle reactions in the biosynthesis of the cell wall peptidoglycan: transfers peptidoglycan precursor phospho-MurNAc-pentapeptide from UDP-MurNAc-pentapeptide onto the lipid carrier undecaprenyl phosphate, yielding undecaprenyl-pyrophosphoryl-MurNAc-pentapeptide, known as lipid I. The polypeptide is Phospho-N-acetylmuramoyl-pentapeptide-transferase (Geobacillus kaustophilus (strain HTA426)).